The following is a 136-amino-acid chain: DNA-directed RNA polymerase subunit omega (136 aa).

It belongs to the RNA polymerase subunit omega family. In terms of assembly, the RNAP catalytic core consists of 2 alpha, 1 beta, 1 beta' and 1 omega subunit. When a sigma factor is associated with the core the holoenzyme is formed, which can initiate transcription.

The enzyme catalyses RNA(n) + a ribonucleoside 5'-triphosphate = RNA(n+1) + diphosphate. In terms of biological role, promotes RNA polymerase assembly. Latches the N- and C-terminal regions of the beta' subunit thereby facilitating its interaction with the beta and alpha subunits. The polypeptide is DNA-directed RNA polymerase subunit omega (Methylorubrum extorquens (strain CM4 / NCIMB 13688) (Methylobacterium extorquens)).